Here is a 571-residue protein sequence, read N- to C-terminus: Glutamate--tRNA ligase (571 aa).

The span at 75-88 (GGPREDVARDKEGL) shows a compositional bias: basic and acidic residues. A disordered region spans residues 75-98 (GGPREDVARDKEGLKPLPGAEPGN). Residues 105-115 (PNPSGPLHIGH) carry the 'HIGH' region motif.

Belongs to the class-I aminoacyl-tRNA synthetase family. Glutamate--tRNA ligase type 2 subfamily.

It localises to the cytoplasm. It carries out the reaction tRNA(Glu) + L-glutamate + ATP = L-glutamyl-tRNA(Glu) + AMP + diphosphate. Catalyzes the attachment of glutamate to tRNA(Glu) in a two-step reaction: glutamate is first activated by ATP to form Glu-AMP and then transferred to the acceptor end of tRNA(Glu). The chain is Glutamate--tRNA ligase from Methanopyrus kandleri (strain AV19 / DSM 6324 / JCM 9639 / NBRC 100938).